The primary structure comprises 183 residues: Adenine phosphoribosyltransferase (183 aa).

Belongs to the purine/pyrimidine phosphoribosyltransferase family. Homodimer.

The protein resides in the cytoplasm. It carries out the reaction AMP + diphosphate = 5-phospho-alpha-D-ribose 1-diphosphate + adenine. The protein operates within purine metabolism; AMP biosynthesis via salvage pathway; AMP from adenine: step 1/1. Catalyzes a salvage reaction resulting in the formation of AMP, that is energically less costly than de novo synthesis. This Edwardsiella ictaluri (strain 93-146) protein is Adenine phosphoribosyltransferase.